The following is a 343-amino-acid chain: ATP-dependent (S)-NAD(P)H-hydrate dehydratase (343 aa).

A mitochondrion-targeting transit peptide spans 1–42 (MAVCPYGAAAVVMALLSAAIAFHCSPLLAVLQRALSLHTAHA). The YjeF C-terminal domain maps to 49 to 340 (LFQLVRNIVP…AEVGAAFSKL (292 aa)). At Lys-63 the chain carries N6-acetyllysine. Tyr-81 is subject to Phosphotyrosine. (6S)-NADPHX-binding positions include Gly-149 and 202–208 (NHVEFSR). Residues 242–246 (KGEQD) and 261–270 (GSSRRCGGQG) contribute to the ATP site. Residue Asp-271 participates in (6S)-NADPHX binding.

The protein belongs to the NnrD/CARKD family. It depends on Mg(2+) as a cofactor.

Its subcellular location is the mitochondrion. It carries out the reaction (6S)-NADHX + ATP = ADP + phosphate + NADH + H(+). The catalysed reaction is (6S)-NADPHX + ATP = ADP + phosphate + NADPH + H(+). Catalyzes the dehydration of the S-form of NAD(P)HX at the expense of ATP, which is converted to ADP. Together with NAD(P)HX epimerase, which catalyzes the epimerization of the S- and R-forms, the enzyme allows the repair of both epimers of NAD(P)HX, a damaged form of NAD(P)H that is a result of enzymatic or heat-dependent hydration. This Rattus norvegicus (Rat) protein is ATP-dependent (S)-NAD(P)H-hydrate dehydratase.